The chain runs to 92 residues: WAP four-disulfide core domain protein 12 (92 aa).

An N-terminal signal peptide occupies residues 1-23 (MGSSRFLVLMVSLALVTLVAAEG). The region spanning 27-74 (NIEKPEVCPADNVRCIKSDPPQCHTDQDCQGIRKCCYLHCGFKCVIPV) is the WAP domain. 4 disulfides stabilise this stretch: cysteine 34/cysteine 62, cysteine 41/cysteine 66, cysteine 49/cysteine 61, and cysteine 55/cysteine 70.

Its subcellular location is the secreted. In terms of biological role, antibacterial protein. Putative acid-stable proteinase inhibitor. The protein is WAP four-disulfide core domain protein 12 (WFDC12) of Aotus nancymaae (Ma's night monkey).